The primary structure comprises 129 residues: Large ribosomal subunit protein bL12c (129 aa).

This sequence belongs to the bacterial ribosomal protein bL12 family. In terms of assembly, homodimer. Part of the ribosomal stalk of the 50S ribosomal subunit. Forms a multimeric L10(L12)X complex, where L10 forms an elongated spine to which 2 to 4 L12 dimers bind in a sequential fashion. Binds GTP-bound translation factors.

It localises to the plastid. The protein localises to the chloroplast. Functionally, forms part of the ribosomal stalk which helps the ribosome interact with GTP-bound translation factors. Is thus essential for accurate translation. This Tupiella akineta (Green alga) protein is Large ribosomal subunit protein bL12c.